A 435-amino-acid polypeptide reads, in one-letter code: AP-2 complex subunit mu (435 aa).

The 265-residue stretch at 170–434 (RNELFLDVLE…IGRSGIYETR (265 aa)) folds into the MHD domain. 3 residues coordinate a 1,2-diacyl-sn-glycero-3-phospho-(1D-myo-inositol-3,4,5-trisphosphate): lysine 341, lysine 345, and lysine 354.

This sequence belongs to the adaptor complexes medium subunit family. Adaptor protein complex 2 (AP-2) is a heterotetramer composed of two large adaptins (alpha-type subunit and beta-type subunit), a medium adaptin (mu-type subunit) and a small adaptin (sigma-type subunit).

It localises to the cell membrane. The protein resides in the membrane. Its subcellular location is the coated pit. Component of the adaptor complexes which link clathrin to receptors in coated vesicles. Clathrin-associated protein complexes are believed to interact with the cytoplasmic tails of membrane proteins, leading to their selection and concentration. AP50 is a subunit of the plasma membrane adaptor. The complex binds polyphosphoinositide-containing lipids. The polypeptide is AP-2 complex subunit mu (ap2m1) (Xenopus laevis (African clawed frog)).